A 155-amino-acid polypeptide reads, in one-letter code: F-box only protein 48 (155 aa).

The interval 1-27 (MHKNSKRNNNLRVSHTEANSVDAEKEK) is disordered. Polar residues predominate over residues 7–19 (RNNNLRVSHTEAN). Residues 32–79 (NNFFELLPAEITFKIFSQLDIRSLCRASLTCRSWNDTIRNSDSLWKPH) enclose the F-box domain.

The chain is F-box only protein 48 (FBXO48) from Homo sapiens (Human).